A 149-amino-acid polypeptide reads, in one-letter code: Transcriptional regulator MraZ (149 aa).

SpoVT-AbrB domains lie at 7–54 (KYVN…GISH) and 83–126 (ALQL…QPQN).

The protein belongs to the MraZ family. Forms oligomers.

The protein resides in the cytoplasm. It localises to the nucleoid. In Rickettsia canadensis (strain McKiel), this protein is Transcriptional regulator MraZ.